We begin with the raw amino-acid sequence, 378 residues long: Alginate lyase (378 aa).

The signal sequence occupies residues 1 to 28 (MQTPKLIRPTLLSMAILSSMAWATGASA). Substrate-binding positions include 67–68 (SK), 140–141 (HT), and Tyr258. A disordered region spans residues 359–378 (LTKVYDPSHEKGDKGDNDGS). Over residues 364–378 (DPSHEKGDKGDNDGS) the composition is skewed to basic and acidic residues.

It belongs to the polysaccharide lyase 5 family.

It localises to the periplasm. The catalysed reaction is Eliminative cleavage of alginate to give oligosaccharides with 4-deoxy-alpha-L-erythro-hex-4-enuronosyl groups at their non-reducing ends and beta-D-mannuronate at their reducing end.. Functionally, catalyzes the depolymerization of alginate by cleaving the beta-1,4 glycosidic bond between two adjacent sugar residues via a beta-elimination mechanism. May serve to degrade mislocalized alginate that is trapped in the periplasmic space. The chain is Alginate lyase from Pseudomonas syringae pv. syringae (strain B728a).